The following is a 222-amino-acid chain: MTSQSVAKKLNHCFSDQALFRTALTHRSFGTPNNERLEFLGDGVLDFVIAASLYHRFPDLPEGDLSRLRANLVRQETLHRLALELNIGAFLRLGEGELKSGGAQRPSILADALEALFGAIYLDAGFEASRAVIEKLFAPLLDDLKPGQFQKDAKTRLQEWLQGRKKALPRYHLLEATGAAHEQRFEIACEIESPALRTVGHGSSRRIAEQVAAEKALKELLA.

The 123-residue stretch at 3–125 (SQSVAKKLNH…LFGAIYLDAG (123 aa)) folds into the RNase III domain. Glu-38 contributes to the Mg(2+) binding site. Asp-42 is an active-site residue. Asp-111 and Glu-114 together coordinate Mg(2+). Glu-114 is an active-site residue. One can recognise a DRBM domain in the interval 152 to 222 (DAKTRLQEWL…AEKALKELLA (71 aa)).

It belongs to the ribonuclease III family. In terms of assembly, homodimer. Requires Mg(2+) as cofactor.

The protein localises to the cytoplasm. It carries out the reaction Endonucleolytic cleavage to 5'-phosphomonoester.. In terms of biological role, digests double-stranded RNA. Involved in the processing of primary rRNA transcript to yield the immediate precursors to the large and small rRNAs (23S and 16S). Processes some mRNAs, and tRNAs when they are encoded in the rRNA operon. Processes pre-crRNA and tracrRNA of type II CRISPR loci if present in the organism. The chain is Ribonuclease 3 from Dechloromonas aromatica (strain RCB).